The following is a 467-amino-acid chain: DNA polymerase IV (467 aa).

One can recognise a UmuC domain in the interval 5–187 (VLHIDMDAFF…LPVGALWGVG (183 aa)). Mg(2+) is bound by residues Asp9 and Asp104. Residue Glu105 is part of the active site. 2 disordered regions span residues 364–386 (PDTD…VEAP) and 428–449 (TKGR…DPLD).

This sequence belongs to the DNA polymerase type-Y family. Monomer. Requires Mg(2+) as cofactor.

Its subcellular location is the cytoplasm. The catalysed reaction is DNA(n) + a 2'-deoxyribonucleoside 5'-triphosphate = DNA(n+1) + diphosphate. Functionally, poorly processive, error-prone DNA polymerase involved in untargeted mutagenesis. Copies undamaged DNA at stalled replication forks, which arise in vivo from mismatched or misaligned primer ends. These misaligned primers can be extended by PolIV. Exhibits no 3'-5' exonuclease (proofreading) activity. May be involved in translesional synthesis, in conjunction with the beta clamp from PolIII. This is DNA polymerase IV from Corynebacterium glutamicum (strain R).